We begin with the raw amino-acid sequence, 179 residues long: Interleukin-22b (179 aa).

Positions 1–33 are cleaved as a signal peptide; sequence MAVLQKSMSFSLMGTLAASCLLLIALWAQEANA. Intrachain disulfides connect cysteine 40–cysteine 132 and cysteine 89–cysteine 178. N-linked (GlcNAc...) asparagine glycosylation is found at asparagine 54, asparagine 68, and asparagine 97.

This sequence belongs to the IL-10 family.

Its subcellular location is the secreted. Its function is as follows. Cytokine that contributes to the inflammatory response in vivo. This chain is Interleukin-22b, found in Mus musculus (Mouse).